Reading from the N-terminus, the 470-residue chain is UDP-glycosyltransferase 75C1 (470 aa).

Histidine 16 functions as the Proton acceptor in the catalytic mechanism. Residue histidine 16 coordinates an anthocyanidin. UDP-alpha-D-glucose contacts are provided by glutamine 347, histidine 362, tryptophan 365, asparagine 366, serine 367, glutamate 370, aspartate 386, and glutamine 387.

The protein belongs to the UDP-glycosyltransferase family. As to expression, expressed in flowers and fruits, especially in pulp, and, at lower levels, in seeds.

It localises to the cytoplasm. It is found in the nucleus. The catalysed reaction is 2-cis-(+)-abscisate + UDP-alpha-D-glucose = beta-D-glucopyranosyl cis-(+)-abscisate + UDP. The enzyme catalyses (indol-3-yl)acetate + UDP-alpha-D-glucose = 1-O-(indol-3-ylacetyl)-beta-D-glucose + UDP. Glucosyltransferase acting on both abscisic acid (ABA) and auxin (IAA). Required for ABA-mediated fruit ripening, seed germination, and negative responses to drought. This is UDP-glycosyltransferase 75C1 from Solanum lycopersicum (Tomato).